The sequence spans 472 residues: WD repeat-containing protein 88 (472 aa).

Residues 1-22 (MASPPRCSPTAHDRECKLPPPS) are disordered. 7 WD repeats span residues 100-139 (GHEH…VVRD), 143-182 (RPKA…LLWK), 184-224 (RYDT…TVSV), 228-267 (HHTR…TLLT), 271-310 (AHSN…FRNC), 319-358 (GHEG…RKLS), and 361-400 (GHND…EIPL). Positions 447 to 472 (LPADTSSSSSSSERENSPPPRGSKDD) are disordered. A compositionally biased stretch (basic and acidic residues) spans 458–472 (SERENSPPPRGSKDD).

This Homo sapiens (Human) protein is WD repeat-containing protein 88 (WDR88).